Here is a 551-residue protein sequence, read N- to C-terminus: Gliomedin (551 aa).

At 1-17 the chain is on the cytoplasmic side; sequence MARGAEGGRGDAGWGLR. Residues 18–39 form a helical; Signal-anchor for type II membrane protein membrane-spanning segment; sequence GALAAVALLSALNAAGTVFALC. At 40–551 the chain is on the extracellular side; the sequence is QWRGLSSALR…VQFLSTTLNQ (512 aa). The interval 72–107 is disordered; it reads LSRAPRGASAPPQDPASSARNKRSHSGEPAPHIRAE. Over residues 79–90 the composition is skewed to low complexity; that stretch reads ASAPPQDPASSA. The N-linked (GlcNAc...) asparagine glycan is linked to Asn130. Collagen-like domains are found at residues 137–195 and 196–222; these read LTGP…RGEK and GDHG…KGDV. The interval 139-282 is disordered; sequence GPSGPPGPPG…GETCAIPNDD (144 aa). 2 stretches are compositionally biased toward basic and acidic residues: residues 191–200 and 213–222; these read ERGEKGDHGE and KGEKGDKGDV. Over residues 237–253 the composition is skewed to pro residues; sequence PPGPPGPPGPPGPPGPP. Residues 299-546 form the Olfactomedin-like domain; that stretch reads QAESMITSIG…LMLYPVQFLS (248 aa). Residues Asn329, Asn357, Asn378, and Asn464 are each glycosylated (N-linked (GlcNAc...) asparagine).

As to quaternary structure, homotrimer (via collagen-like domains). Interacts with NRCAM and NFASC/neurofascin. Interaction with glial NRCAM enhances interaction with axonal NFASC. Interacts with MYOC. N-glycosylated. Post-translationally, proteolytic processing by a furin-like protease causes shedding of the ectodomain. Further cleavage by BMP1 releases the olfactomedin-like domain. In terms of tissue distribution, specifically expressed in spinal cord, brain, placenta and sciatic nerve. More abundant in peripheral than central nervous system.

It localises to the cell membrane. It is found in the cell projection. Its subcellular location is the axon. The protein resides in the secreted. The protein localises to the extracellular space. It localises to the extracellular matrix. Ligand for NRCAM and NFASC/neurofascin that plays a role in the formation and maintenance of the nodes of Ranvier on myelinated axons. Mediates interaction between Schwann cell microvilli and axons via its interactions with NRCAM and NFASC. Nodes of Ranvier contain clustered sodium channels that are crucial for the saltatory propagation of action potentials along myelinated axons. During development, nodes of Ranvier are formed by the fusion of two heminodes. Required for normal clustering of sodium channels at heminodes; not required for the formation of mature nodes with normal sodium channel clusters. Required, together with NRCAM, for maintaining NFASC and sodium channel clusters at mature nodes of Ranvier. The polypeptide is Gliomedin (GLDN) (Homo sapiens (Human)).